The primary structure comprises 530 residues: Type 2 DNA topoisomerase 6 subunit B (530 aa).

Residues asparagine 42, aspartate 76, serine 96–lysine 98, methionine 107–lysine 113, and lysine 427 contribute to the ATP site.

The protein belongs to the TOP6B family. Homodimer. Heterotetramer of two Top6A and two Top6B chains.

It carries out the reaction ATP-dependent breakage, passage and rejoining of double-stranded DNA.. Not inhibited by the DNA gyrase inhibitor novobiocin, instead inhibited by eukaryotic topoisomerase inhibitors such as m- and o-amsacrine, ellipticine, and the quinolone CP-115,953. Radicicol inhibits the ATPase activity. Its function is as follows. Relaxes both positive and negative supercoils and exhibits a strong decatenase and unknotting activity; it cannot introduce DNA supercoils. ATP is absolutely required for DNA cleavage; the nonhydrolyzable analog AMP-PNP generates nicked or linear products from a supercoiled dsDNA substrate. Generates staggered two-nucleotide long 5' overhangs. The enzyme is covalently attached transiently to the 5'-ends of the cleaved strands. The polypeptide is Type 2 DNA topoisomerase 6 subunit B (Saccharolobus shibatae (strain ATCC 51178 / DSM 5389 / JCM 8931 / NBRC 15437 / B12) (Sulfolobus shibatae)).